The sequence spans 165 residues: Cytochrome c-type biogenesis protein CcmE (165 aa).

Over 1 to 29 (MSATAEQNARNPKGKGGFARTVSQRKRKR) the chain is Cytoplasmic. Residues 30-50 (LFLIGGALAVLAVAVGLMLTA) traverse the membrane as a helical; Signal-anchor for type II membrane protein segment. Residues 51 to 165 (FNQDIRFFRT…LKKKGVWEGK (115 aa)) are Periplasmic-facing. Heme is bound by residues His143 and Tyr147.

This sequence belongs to the CcmE/CycJ family.

The protein resides in the cell inner membrane. In terms of biological role, heme chaperone required for the biogenesis of c-type cytochromes. Transiently binds heme delivered by CcmC and transfers the heme to apo-cytochromes in a process facilitated by CcmF and CcmH. The polypeptide is Cytochrome c-type biogenesis protein CcmE (Brucella canis (strain ATCC 23365 / NCTC 10854 / RM-666)).